The primary structure comprises 63 residues: DNA-directed RNA polymerase 7 kDa subunit (63 aa).

It belongs to the poxviridae DNA-directed RNA polymerase 7 kDa subunit family. The DNA-dependent RNA polymerase (vRNAP) consists of eight subunits encoded by early viral genes and termed according to their apparent molecular masses Rpo147, Rpo132, Rpo35, Rpo30, Rpo22, Rpo19, Rpo18, and Rpo7. The same holoenzyme, with the addition of the transcription-specificity factor RAP94, is used for early gene expression.

The protein localises to the virion. The catalysed reaction is RNA(n) + a ribonucleoside 5'-triphosphate = RNA(n+1) + diphosphate. In terms of biological role, part of the DNA-dependent RNA polymerase which catalyzes the transcription of viral DNA into RNA using the four ribonucleoside triphosphates as substrates. Responsible for the transcription of early, intermediate and late genes. DNA-dependent RNA polymerase associates with the early transcription factor (ETF), itself composed of OPG118 and OPG134, thereby allowing the early genes transcription. Late transcription, and probably also intermediate transcription, require newly synthesized RNA polymerase. The chain is DNA-directed RNA polymerase 7 kDa subunit (OPG090) from Monkeypox virus.